Here is a 148-residue protein sequence, read N- to C-terminus: Glycine cleavage system H protein 5 (148 aa).

One can recognise a Lipoyl-binding domain in the interval 33 to 115 (VFTIGLTSVA…YGQGWIAKVK (83 aa)). Position 74 is an N6-lipoyllysine (K74).

The protein belongs to the GcvH family. As to quaternary structure, the glycine cleavage system is composed of four proteins: P, T, L and H. Requires (R)-lipoate as cofactor.

Its function is as follows. The glycine cleavage system catalyzes the degradation of glycine. The H protein shuttles the methylamine group of glycine from the P protein to the T protein. In Aquifex aeolicus (strain VF5), this protein is Glycine cleavage system H protein 5.